The chain runs to 197 residues: Probable chorismate pyruvate-lyase (197 aa).

Residues 1–14 (MRFDAADAHWRETP) are compositionally biased toward basic and acidic residues. The interval 1–25 (MRFDAADAHWRETPRPGASGAQKDW) is disordered. Residues Arg-73, Leu-111, and Glu-173 each coordinate substrate.

The protein belongs to the UbiC family.

The protein resides in the cytoplasm. The catalysed reaction is chorismate = 4-hydroxybenzoate + pyruvate. Its pathway is cofactor biosynthesis; ubiquinone biosynthesis. Removes the pyruvyl group from chorismate, with concomitant aromatization of the ring, to provide 4-hydroxybenzoate (4HB) for the ubiquinone pathway. The polypeptide is Probable chorismate pyruvate-lyase (Burkholderia thailandensis (strain ATCC 700388 / DSM 13276 / CCUG 48851 / CIP 106301 / E264)).